The sequence spans 250 residues: mRNA-decapping protein g5R (250 aa).

Residues 97–243 (QKFRKNWLLP…IIGPAFNFIK (147 aa)) form the Nudix hydrolase domain. The Nudix box motif lies at 132-153 (GKPKEDESDLTCAIREFEEETG). Residue Glu-138 participates in Mg(2+) binding. Glu-147 (nucleophile) is an active-site residue. Residues Glu-151 and Asp-173 each coordinate Mg(2+).

Belongs to the Nudix hydrolase family. DIPP subfamily. As to quaternary structure, interacts with host RPL23A. Requires Mg(2+) as cofactor. It depends on Mn(2+) as a cofactor.

The protein resides in the host rough endoplasmic reticulum. The enzyme catalyses diphospho-myo-inositol polyphosphate + H2O = myo-inositol polyphosphate + phosphate.. Decapping enzyme required for the removal of the 5'-end m7GpppN cap tethered to viral and host mRNAs to allow their decay in cells. May therefore accelerate viral and cellular mRNA turnover to eliminate competing host mRNAs and allow stage-specific synthesis of viral proteins. Acceleration of the turnover of cellular transcripts may even promote the shutoff of host protein synthesis. In addition to the mRNA cap, g5R also efficiently hydrolyzes diphosphoinositol polyphosphates. Down-regulation of the level of PP-InsP5 (diphosphoinositol pentakisphosphate) may play a role in viral manipulation of the cellular secretory pathway, a step necessary for the formation of virions. Binds viral and cellular poly(A) mRNAs, thereby decreasing both types of mRNAs. The polypeptide is mRNA-decapping protein g5R (African swine fever virus (isolate Tick/South Africa/Pretoriuskop Pr4/1996) (ASFV)).